Reading from the N-terminus, the 878-residue chain is Vacuolar membrane protease (878 aa).

Residues 1-16 lie on the Cytoplasmic side of the membrane; it reads MASLRLPRANPLAFTR. The helical transmembrane segment at 17–37 threads the bilayer; it reads WPVTVITAIVYLALLIPLLVV. The Vacuolar segment spans residues 38–390; it reads HHVVPSAPSS…STFVLFQLHT (353 aa). Residues Asn-53 and Asn-119 are each glycosylated (N-linked (GlcNAc...) asparagine). Residues His-174 and Asp-186 each contribute to the Zn(2+) site. Glu-220 serves as the catalytic Proton acceptor. Zn(2+)-binding residues include Glu-221, Glu-246, and His-319. The helical transmembrane segment at 391–411 threads the bilayer; sequence LFALLVTLLIVGPLTLLFTSI. The Cytoplasmic segment spans residues 412 to 442; the sequence is ALTKADKMYLFRSSAKSEDRLDVVPLQGLRG. Residues 443–463 form a helical membrane-spanning segment; that stretch reads FFRFPFLFGIPTVVTVGLAYL. At 464-473 the chain is on the vacuolar side; sequence VTKVNPYIIH. The helical transmembrane segment at 474 to 494 threads the bilayer; the sequence is SSAYAVWSMMVAAWVFLAWFV. The Cytoplasmic segment spans residues 495–508; sequence SRVADFARPSAFHR. A helical membrane pass occupies residues 509–529; the sequence is IYTLTWMYVLSWVSAVIATVY. Over 530–533 the chain is Vacuolar; the sequence is ANQR. Residues 534 to 554 form a helical membrane-spanning segment; that stretch reads GLAGGYFIFFFHAGIFLATWI. Over 555–659 the chain is Cytoplasmic; that stretch reads SYLELFALPS…ALPKWTWGLQ (105 aa). Residues 577 to 590 are compositionally biased toward low complexity; it reads GRASGHGSRRGTTS. The segment at 577-611 is disordered; sequence GRASGHGSRRGTTSGEDDGEEAEEEPTESTSLLGS. Positions 591–603 are enriched in acidic residues; that stretch reads GEDDGEEAEEEPT. Residues 660 to 680 traverse the membrane as a helical segment; sequence LLLTAPITLIMVGPLALLTIS. At 681–693 the chain is on the vacuolar side; it reads AISQTGQDGGHPL. Residues 694–714 form a helical membrane-spanning segment; the sequence is FAYVAIAIFTTIMLTPLLPFI. Residues 715–721 lie on the Cytoplasmic side of the membrane; the sequence is HRYTYHV. A helical membrane pass occupies residues 722–742; it reads PLFLLAVFLGTLIYNLVAFPF. Over 743 to 878 the chain is Vacuolar; that stretch reads SDSNRLKLYY…RRAFEIGNDD (136 aa).

Belongs to the peptidase M28 family. Requires Zn(2+) as cofactor.

The protein resides in the vacuole membrane. Functionally, may be involved in vacuolar sorting and osmoregulation. The polypeptide is Vacuolar membrane protease (Aspergillus flavus (strain ATCC 200026 / FGSC A1120 / IAM 13836 / NRRL 3357 / JCM 12722 / SRRC 167)).